The following is a 455-amino-acid chain: GTPase Der (455 aa).

2 consecutive EngA-type G domains span residues 4 to 169 (PIVA…PKDQ) and 178 to 355 (LRVS…GQHQ). GTP-binding positions include 10–17 (GRPNVGKS), 57–61 (DTGGL), 120–123 (NKLE), 184–191 (GRPNVGKS), 233–237 (DTAGI), and 298–301 (NKWD). The 86-residue stretch at 356 to 441 (RRVSTSVLNE…PVRFIFRGKP (86 aa)) folds into the KH-like domain.

It belongs to the TRAFAC class TrmE-Era-EngA-EngB-Septin-like GTPase superfamily. EngA (Der) GTPase family. Associates with the 50S ribosomal subunit.

GTPase that plays an essential role in the late steps of ribosome biogenesis. The polypeptide is GTPase Der (Gloeobacter violaceus (strain ATCC 29082 / PCC 7421)).